A 159-amino-acid chain; its full sequence is 6,7-dimethyl-8-ribityllumazine synthase (159 aa).

5-amino-6-(D-ribitylamino)uracil-binding positions include tryptophan 30, 64–66, and 88–90; these read TFE and CVI. Residue 93–94 coordinates (2S)-2-hydroxy-3-oxobutyl phosphate; the sequence is ET. Catalysis depends on histidine 96, which acts as the Proton donor. 5-amino-6-(D-ribitylamino)uracil is bound at residue phenylalanine 121. Residue arginine 135 coordinates (2S)-2-hydroxy-3-oxobutyl phosphate.

It belongs to the DMRL synthase family.

It carries out the reaction (2S)-2-hydroxy-3-oxobutyl phosphate + 5-amino-6-(D-ribitylamino)uracil = 6,7-dimethyl-8-(1-D-ribityl)lumazine + phosphate + 2 H2O + H(+). It functions in the pathway cofactor biosynthesis; riboflavin biosynthesis; riboflavin from 2-hydroxy-3-oxobutyl phosphate and 5-amino-6-(D-ribitylamino)uracil: step 1/2. Catalyzes the formation of 6,7-dimethyl-8-ribityllumazine by condensation of 5-amino-6-(D-ribitylamino)uracil with 3,4-dihydroxy-2-butanone 4-phosphate. This is the penultimate step in the biosynthesis of riboflavin. The sequence is that of 6,7-dimethyl-8-ribityllumazine synthase from Cytophaga hutchinsonii (strain ATCC 33406 / DSM 1761 / CIP 103989 / NBRC 15051 / NCIMB 9469 / D465).